We begin with the raw amino-acid sequence, 387 residues long: Putative actin-29 (387 aa).

Belongs to the actin family.

Its subcellular location is the cytoplasm. The protein localises to the cytoskeleton. The catalysed reaction is ATP + H2O = ADP + phosphate + H(+). Functionally, actins are highly conserved proteins that are involved in various types of cell motility and are ubiquitously expressed in all eukaryotic cells. Multiple isoforms are involved in various cellular functions such as cytoskeleton structure, cell mobility, chromosome movement and muscle contraction. The polypeptide is Putative actin-29 (act29) (Dictyostelium discoideum (Social amoeba)).